We begin with the raw amino-acid sequence, 139 residues long: ATP synthase epsilon chain (139 aa).

Belongs to the ATPase epsilon chain family. In terms of assembly, F-type ATPases have 2 components, CF(1) - the catalytic core - and CF(0) - the membrane proton channel. CF(1) has five subunits: alpha(3), beta(3), gamma(1), delta(1), epsilon(1). CF(0) has three main subunits: a, b and c.

Its subcellular location is the cell membrane. Its function is as follows. Produces ATP from ADP in the presence of a proton gradient across the membrane. The chain is ATP synthase epsilon chain from Streptococcus pneumoniae serotype 2 (strain D39 / NCTC 7466).